The chain runs to 910 residues: Leucine--tRNA ligase (910 aa).

Residues 50 to 60 (PYTNGSLHVGH) carry the 'HIGH' region motif. The short motif at 611-615 (KISKS) is the 'KMSKS' region element. Position 614 (Lys-614) interacts with ATP.

Belongs to the class-I aminoacyl-tRNA synthetase family.

It localises to the cytoplasm. It catalyses the reaction tRNA(Leu) + L-leucine + ATP = L-leucyl-tRNA(Leu) + AMP + diphosphate. This is Leucine--tRNA ligase from Thermoplasma volcanium (strain ATCC 51530 / DSM 4299 / JCM 9571 / NBRC 15438 / GSS1).